The sequence spans 304 residues: N-acetylmuramic acid 6-phosphate etherase (304 aa).

One can recognise an SIS domain in the interval Ile62 to Lys225. Catalysis depends on Glu90, which acts as the Proton donor. Glu121 is a catalytic residue.

It belongs to the GCKR-like family. MurNAc-6-P etherase subfamily. Homodimer.

The catalysed reaction is N-acetyl-D-muramate 6-phosphate + H2O = N-acetyl-D-glucosamine 6-phosphate + (R)-lactate. It participates in amino-sugar metabolism; 1,6-anhydro-N-acetylmuramate degradation. The protein operates within amino-sugar metabolism; N-acetylmuramate degradation. It functions in the pathway cell wall biogenesis; peptidoglycan recycling. Functionally, specifically catalyzes the cleavage of the D-lactyl ether substituent of MurNAc 6-phosphate, producing GlcNAc 6-phosphate and D-lactate. Together with AnmK, is also required for the utilization of anhydro-N-acetylmuramic acid (anhMurNAc) either imported from the medium or derived from its own cell wall murein, and thus plays a role in cell wall recycling. This Actinobacillus pleuropneumoniae serotype 5b (strain L20) protein is N-acetylmuramic acid 6-phosphate etherase.